The following is a 357-amino-acid chain: Ribosomal RNA large subunit methyltransferase M (357 aa).

S-adenosyl-L-methionine contacts are provided by residues S183, 216 to 219 (APGG), D235, D255, and D271. The active-site Proton acceptor is the K300.

It belongs to the class I-like SAM-binding methyltransferase superfamily. RNA methyltransferase RlmE family. RlmM subfamily. Monomer.

It is found in the cytoplasm. The enzyme catalyses cytidine(2498) in 23S rRNA + S-adenosyl-L-methionine = 2'-O-methylcytidine(2498) in 23S rRNA + S-adenosyl-L-homocysteine + H(+). Catalyzes the 2'-O-methylation at nucleotide C2498 in 23S rRNA. In Pseudomonas savastanoi pv. phaseolicola (strain 1448A / Race 6) (Pseudomonas syringae pv. phaseolicola (strain 1448A / Race 6)), this protein is Ribosomal RNA large subunit methyltransferase M.